A 790-amino-acid polypeptide reads, in one-letter code: Lon protease (790 aa).

The region spanning 23–220 (LPIMPIFHTV…EITLIVNHQL (198 aa)) is the Lon N-terminal domain. 372-379 (GPPGTGKT) provides a ligand contact to ATP. The region spanning 608-789 (ISKPGIAMGL…REVLNIALSR (182 aa)) is the Lon proteolytic domain. Catalysis depends on residues S695 and K738.

Belongs to the peptidase S16 family. As to quaternary structure, homohexamer. Organized in a ring with a central cavity.

The protein localises to the cytoplasm. It carries out the reaction Hydrolysis of proteins in presence of ATP.. In terms of biological role, ATP-dependent serine protease that mediates the selective degradation of mutant and abnormal proteins as well as certain short-lived regulatory proteins. Required for cellular homeostasis and for survival from DNA damage and developmental changes induced by stress. Degrades polypeptides processively to yield small peptide fragments that are 5 to 10 amino acids long. Binds to DNA in a double-stranded, site-specific manner. In Syntrophus aciditrophicus (strain SB), this protein is Lon protease.